Consider the following 189-residue polypeptide: MVKANYIRAGRLVRILRGPRQNRVGVIVDIVDANRVLVENPCEQKMWRHVQNLKNVEPLKFCVSISRNCSTKALKEALESKKVLEKYAATKVRRPHRAKKAFAESTDFERYQLRVAKRSRAYWARKIFDENDKKNPVSWHKVALKKLLKNAKKVDSTPAAKKRVEKARAARKARLAAGKSKTKVAASKK.

The protein belongs to the eukaryotic ribosomal protein eL14 family.

Its function is as follows. Component of the large ribosomal subunit. The ribosome is a large ribonucleoprotein complex responsible for the synthesis of proteins in the cell. This is Large ribosomal subunit protein eL14 from Trypanosoma brucei brucei.